The primary structure comprises 334 residues: Phenylalanine--tRNA ligase alpha subunit (334 aa).

Glu-249 is a binding site for Mg(2+).

Belongs to the class-II aminoacyl-tRNA synthetase family. Phe-tRNA synthetase alpha subunit type 1 subfamily. In terms of assembly, tetramer of two alpha and two beta subunits. Mg(2+) is required as a cofactor.

The protein resides in the cytoplasm. It catalyses the reaction tRNA(Phe) + L-phenylalanine + ATP = L-phenylalanyl-tRNA(Phe) + AMP + diphosphate + H(+). This Desulfosudis oleivorans (strain DSM 6200 / JCM 39069 / Hxd3) (Desulfococcus oleovorans) protein is Phenylalanine--tRNA ligase alpha subunit.